The primary structure comprises 269 residues: Replication protein A 32 kDa subunit (269 aa).

Polar residues predominate over residues 1–22 (MSNRVQGGFDNNSGNNQSAQKQ). Residues 1–25 (MSNRVQGGFDNNSGNNQSAQKQQAE) are disordered. The OB DNA-binding region spans 69-149 (ITAKFEFLQS…AQIQLLYFSI (81 aa)).

This sequence belongs to the replication factor A protein 2 family. In terms of assembly, component of the replication protein A complex (RPA), a heterotrimeric complex composed of RPA1, RPA2/TEB2 and RPA3/TEB3. Component of the telomerase holoenzyme complex, composed of the catalytic core (the catalytic subunit TERT, the telomerase RNA template component TER and TAP65/p65), which is associated with two heterotrimeric subcomplexes: (i) the replication protein A (RPA)-related subcomplex, composed of TEB1, RPA2/TEB2 and RPA3/TEB3 and (ii) the CST-like subcomplex, composed of TAP75/p75, TAP45/p45 and TAP19/p19. TEB1 and the CST-like subcomplex are tethered to the catalytic core by TAP50/p50.

It is found in the nucleus. Its subcellular location is the chromosome. The protein resides in the telomere. Functionally, component of the heterotrimeric replication protein A (RPA) and holoenzyme telomerase ribonucleoprotein complexes. As part of the RPA complex, binds and stabilizes single-stranded DNA (ssDNA) intermediates, that form during DNA replication or upon DNA stress. It prevents their reannealing and in parallel, recruits and activates different proteins and complexes involved in DNA metabolism. Thereby, it plays an essential role both in DNA replication and the cellular response to DNA damage. In the cellular response to DNA damage, the RPA complex controls DNA repair and DNA damage checkpoint activation. Also part of a subcomplex of the holoenzyme telomerase ribonucleoprotein complex: this subcomplex that contains TEB1, RPA2/TEB2, RPA3/TEB3, but not RPA1, mediates the recruitment of telomerase to telomeric DNA via specific interaction between TEB1 and telomeric ssDNA. In the holoenzyme telomerase ribonucleoprotein complex, RPA2/TEB2 and RPA3/TEB3 act as assembly factors for TEB1 incorporation into telomerase holoenzyme. In the holoenzyme telomerase ribonucleoprotein complex, RPA2/TEB2 does not contribute to ssDNA affinity, while it contributes to ssDNA affinity in the RPA complex. The protein is Replication protein A 32 kDa subunit (RPA2) of Tetrahymena thermophila (strain SB210).